We begin with the raw amino-acid sequence, 269 residues long: Propanediol uptake facilitator PduF (269 aa).

Transmembrane regions (helical) follow at residues 10–30 (IAEFLGTGLFLFFGIGCLSAL) and 42–62 (ICIIWGLGISLAVYLTAGISG). An NPA 1 motif is present at residues 66-68 (NPA). A run of 3 helical transmembrane segments spans residues 69–89 (ITIALWLFACFPGRKVLPYTV), 143–163 (VWQAALVEVVITSILMGMIMA), and 179–199 (LLIGILVAVIGASTGPLTGFA). The short motif at 201–203 (NPA) is the NPA 2 element. The chain crosses the membrane as a helical span at residues 228–248 (IPYFIVPIVAPIIGACAGAAI).

The protein belongs to the MIP/aquaporin (TC 1.A.8) family.

The protein localises to the cell inner membrane. Probably facilitates diffusion of 1,2-propanediol (1,2-PD) into the cell. This is Propanediol uptake facilitator PduF from Citrobacter freundii.